The following is a 500-amino-acid chain: Tyrosine decarboxylase 2 (500 aa).

2 consecutive repeat copies span residues 65 to 122 and 125 to 176. Residues 65-176 form a 2 X approximate tandem repeats region; it reads EDIRQKIVPG…KFLNRFGKRS (112 aa). A substrate-binding site is contributed by serine 89. Pyridoxal 5'-phosphate is bound by residues alanine 153 and serine 154. Residue histidine 189 coordinates substrate. 2 residues coordinate pyridoxal 5'-phosphate: threonine 248 and asparagine 302. Position 305 is an N6-(pyridoxal phosphate)lysine (lysine 305).

This sequence belongs to the group II decarboxylase family. Pyridoxal 5'-phosphate serves as cofactor. In terms of tissue distribution, mostly expressed in bulbs, and, to a lower extent, in stems, roots, leaves and flowers.

The enzyme catalyses L-tyrosine + H(+) = tyramine + CO2. The protein operates within alkaloid biosynthesis. Its function is as follows. Catalyzes the decarboxylation of L-tyrosine to tyramine, which is converted to norbelladine, a precursor to all Amaryllidaceae alkaloids such as galanthamine, lycorine and haemanthamine, and including haemanthamine- and crinamine-type alkaloids, promising anticancer agents. The chain is Tyrosine decarboxylase 2 from Narcissus pseudonarcissus (Daffodil).